The following is a 270-amino-acid chain: Probable septum site-determining protein MinC (270 aa).

Positions 105 to 129 are disordered; it reads DRRAPSSKAADEAPVQQAEPAAPAA. Residues 116 to 129 are compositionally biased toward low complexity; it reads EAPVQQAEPAAPAA.

It belongs to the MinC family. Interacts with MinD and FtsZ.

Functionally, cell division inhibitor that blocks the formation of polar Z ring septums. Rapidly oscillates between the poles of the cell to destabilize FtsZ filaments that have formed before they mature into polar Z rings. Prevents FtsZ polymerization. In Burkholderia mallei (strain NCTC 10247), this protein is Probable septum site-determining protein MinC.